A 255-amino-acid chain; its full sequence is Malonyl-[acyl-carrier protein] O-methyltransferase (255 aa).

It belongs to the methyltransferase superfamily.

The catalysed reaction is malonyl-[ACP] + S-adenosyl-L-methionine = malonyl-[ACP] methyl ester + S-adenosyl-L-homocysteine. It functions in the pathway cofactor biosynthesis; biotin biosynthesis. Functionally, converts the free carboxyl group of a malonyl-thioester to its methyl ester by transfer of a methyl group from S-adenosyl-L-methionine (SAM). It allows to synthesize pimeloyl-ACP via the fatty acid synthetic pathway. This is Malonyl-[acyl-carrier protein] O-methyltransferase from Serratia marcescens.